The chain runs to 127 residues: Ribosome-binding factor A (127 aa).

It belongs to the RbfA family. As to quaternary structure, monomer. Binds 30S ribosomal subunits, but not 50S ribosomal subunits or 70S ribosomes.

Its subcellular location is the cytoplasm. One of several proteins that assist in the late maturation steps of the functional core of the 30S ribosomal subunit. Associates with free 30S ribosomal subunits (but not with 30S subunits that are part of 70S ribosomes or polysomes). Required for efficient processing of 16S rRNA. May interact with the 5'-terminal helix region of 16S rRNA. In Nitrosococcus oceani (strain ATCC 19707 / BCRC 17464 / JCM 30415 / NCIMB 11848 / C-107), this protein is Ribosome-binding factor A.